The primary structure comprises 174 residues: Repair DNA polymerase X (174 aa).

The tract at residues 42 to 51 (REEKMLNDVD) is involved in ssDNA binding. Mg(2+) contacts are provided by D49 and D51. A disulfide bridge connects residues C81 and C86. D100 contributes to the Mg(2+) binding site.

It belongs to the DNA polymerase type-X family. The cofactor is Mg(2+).

The protein resides in the virion. The enzyme catalyses DNA(n) + a 2'-deoxyribonucleoside 5'-triphosphate = DNA(n+1) + diphosphate. In terms of biological role, error-prone polymerase lacking a proofreading 3'-5' exonuclease which catalyzes the gap-filling reaction during the DNA repair process. Specifically binds intermediates in the single-nucleotide base-excision repair process. Also catalyzes DNA polymerization with low nucleotide-insertion fidelity. Probably acts as a strategic DNA mutase, which gives rise to a rapid emergence of variants. Generates mismatched G-G pairs, in that case, the polymerase first binds the deoxynucleotide followed by mismatch formation. Together with the viral DNA ligase, fills the single nucleotide gaps generated by the AP endonuclease. Binds DNA with high affinity via the helix alphaE. The polypeptide is Repair DNA polymerase X (Ornithodoros (relapsing fever ticks)).